We begin with the raw amino-acid sequence, 390 residues long: Homoserine O-succinyltransferase (390 aa).

The AB hydrolase-1 domain occupies 56 to 365 (NAVLICHALS…SPHGHDAFLL (310 aa)). The active-site Nucleophile is serine 162. Arginine 232 contributes to the substrate binding site. Catalysis depends on residues aspartate 327 and histidine 360. Aspartate 361 contributes to the substrate binding site.

This sequence belongs to the AB hydrolase superfamily. MetX family. As to quaternary structure, homodimer.

The protein resides in the cytoplasm. It carries out the reaction L-homoserine + succinyl-CoA = O-succinyl-L-homoserine + CoA. Its pathway is amino-acid biosynthesis; L-methionine biosynthesis via de novo pathway; O-succinyl-L-homoserine from L-homoserine: step 1/1. In terms of biological role, transfers a succinyl group from succinyl-CoA to L-homoserine, forming succinyl-L-homoserine. In vitro, also has serine succinyl transferase activity. This chain is Homoserine O-succinyltransferase, found in Litchfieldella anticariensis (strain DSM 16096 / CECT 5854 / CIP 108499 / LMG 22089 / FP35) (Halomonas anticariensis).